The chain runs to 362 residues: Protein RAFTIN 1B (362 aa).

The first 20 residues, 1–20, serve as a signal peptide directing secretion; the sequence is MARFLVALLAATLVAVQAGG. Residues 58–94 form a disordered region; it reads STSFVRDPEDRPPFDYRDYSRSSSDDEPSKSTVAASG. Residues 63–86 are compositionally biased toward basic and acidic residues; the sequence is RDPEDRPPFDYRDYSRSSSDDEPS. Asparagine 102 carries N-linked (GlcNAc...) asparagine glycosylation. One can recognise a BURP domain in the interval 142–356; it reads FFHEEAVRVG…PYGHIIWAKN (215 aa).

As to expression, specifically expressed in anthers, in the tapetum and microspores (at protein level).

In terms of biological role, required for pollen development. Probably synthesized in the tapetum, packaged in Ubisch bodies and transported at appropriate stages to the micropsores. The polypeptide is Protein RAFTIN 1B (RAFTIN1B) (Triticum aestivum (Wheat)).